The primary structure comprises 60 residues: Small ribosomal subunit protein bS21 (60 aa).

Residues 36–60 (QFFETPQEKHKRKEATRRRQRSRRR) are disordered. A compositionally biased stretch (basic residues) spans 44–60 (KHKRKEATRRRQRSRRR).

It belongs to the bacterial ribosomal protein bS21 family.

This Synechocystis sp. (strain ATCC 27184 / PCC 6803 / Kazusa) protein is Small ribosomal subunit protein bS21 (rpsU).